We begin with the raw amino-acid sequence, 2364 residues long: Spectrin beta chain, non-erythrocytic 1 (2364 aa).

N-acetylthreonine is present on threonine 2. Positions 2-275 are actin-binding; the sequence is TTTVATDYDN…IITYVVTYYH (274 aa). Phosphoserine occurs at positions 14 and 36. Calponin-homology (CH) domains lie at 54 to 158 and 173 to 278; these read AVQK…LRFQ and KSAK…HYFS. N6-acetyllysine is present on lysine 90. Serine 228 carries the phosphoserine modification. Spectrin repeat units lie at residues 303–411, 423–525, 530–636, 639–742, 745–847, 850–952, 957–1060, 1063–1166, 1170–1258, 1276–1376, 1381–1482, 1486–1590, 1592–1696, 1698–1801, and 1805–1907; these read MIEK…LALR, LARR…QRLE, LQKI…RLEE, RLWK…RLEE, LLHQ…ALQD, ALYK…DALL, IQNY…SLGE, KLQQ…NLLS, AYQQ…DRHR, DLQK…AQRL, KAEL…HNLL, EIHQ…RLEE, HRAQ…KLDE, HRLF…TQIL, and YELH…RVRL. Phosphoserine is present on residues serine 817, serine 825, serine 903, serine 1057, serine 1076, serine 1079, and serine 1237. Phosphoserine is present on residues serine 1388, serine 1447, and serine 1557. Residues 1563-2093 form an interaction with ANK2 region; that stretch reads IRQRLADLKQ…LLEVRRQQEE (531 aa). A Phosphotyrosine modification is found at tyrosine 1805. Residues lysine 1815, lysine 1913, and lysine 1989 each carry the N6-acetyllysine modification. Spectrin repeat units follow at residues 1914 to 2014 and 2018 to 2097; these read FRFF…EWLR and EVHQ…EERK. Residues 2089-2196 form a disordered region; sequence RQQEEEERKR…TLPARTQETP (108 aa). Residues serine 2102, serine 2128, and serine 2138 each carry the phosphoserine modification. Positions 2115 to 2131 are enriched in polar residues; the sequence is SQQQWDTSKGEQVSQNG. The span at 2145–2166 shows a compositional bias: polar residues; it reads VDTSEMVNGATEQRTSSKESSP. A Phosphothreonine modification is found at threonine 2147. A Phosphoserine modification is found at serine 2148. Residues 2149 to 2177 are mediates interaction with CAMSAP1; it reads EMVNGATEQRTSSKESSPIPSPTSDRKAK. A Phosphothreonine modification is found at threonine 2159. Serine 2160, serine 2161, serine 2164, serine 2165, and serine 2169 each carry phosphoserine. Threonine 2171 carries the phosphothreonine modification. 2 positions are modified to phosphoserine: serine 2172 and serine 2184. Positions 2184 to 2196 are enriched in polar residues; that stretch reads SAATLPARTQETP. A phosphothreonine mark is found at threonine 2187 and threonine 2195. A PH domain is found at 2197-2307; sequence SAQMEGFLNR…WIQAISSAIS (111 aa). The tract at residues 2309–2364 is disordered; it reads DKHEVSASTQSTPASSRAQTLPTSVVTITSESSPGKREKDKEKDKEKRFSLFGKKK. Serine 2314 and serine 2319 each carry phosphoserine. The segment covering 2314 to 2341 has biased composition (polar residues); it reads SASTQSTPASSRAQTLPTSVVTITSESS. A Phosphothreonine modification is found at threonine 2320. The O-linked (GlcNAc) serine glycan is linked to serine 2324. Threonine 2328 carries the post-translational modification Phosphothreonine. Residues serine 2340 and serine 2341 each carry the phosphoserine modification. The span at 2342–2357 shows a compositional bias: basic and acidic residues; sequence PGKREKDKEKDKEKRF.

It belongs to the spectrin family. In terms of assembly, interacts with CAMSAP1. Interacts with ANK2. Interacts with CPNE4 (via VWFA domain). Like erythrocyte spectrin, the spectrin-like proteins are capable to form dimers which can further associate to tetramers. Can form heterodimers with SPTAN1. Isoform Short cannot bind to the axonal protein fodaxin. Isoform 2 is present in brain, lung and kidney (at protein level).

The protein resides in the cytoplasm. The protein localises to the cytoskeleton. Its subcellular location is the myofibril. It localises to the sarcomere. It is found in the m line. The protein resides in the cytosol. The protein localises to the cell membrane. Functionally, fodrin, which seems to be involved in secretion, interacts with calmodulin in a calcium-dependent manner and is thus candidate for the calcium-dependent movement of the cytoskeleton at the membrane. Plays a critical role in central nervous system development and function. The polypeptide is Spectrin beta chain, non-erythrocytic 1 (SPTBN1) (Homo sapiens (Human)).